A 341-amino-acid polypeptide reads, in one-letter code: Putative NADPH-dependent methylglyoxal reductase GRP2 (341 aa).

Residues Lys40 and Tyr171 each coordinate NADP(+).

Belongs to the NAD(P)-dependent epimerase/dehydratase family. Dihydroflavonol-4-reductase subfamily.

The protein localises to the cytoplasm. It catalyses the reaction (S)-lactaldehyde + NADP(+) = methylglyoxal + NADPH + H(+). Catalyzes the irreversible reduction of the cytotoxic compound methylglyoxal (MG, 2-oxopropanal) to (S)-lactaldehyde. MG is synthesized via a bypath of glycolysis from dihydroxyacetone phosphate and is believed to play a role in cell cycle regulation and stress adaptation. The polypeptide is Putative NADPH-dependent methylglyoxal reductase GRP2 (GRP2) (Candida albicans (strain SC5314 / ATCC MYA-2876) (Yeast)).